The primary structure comprises 375 residues: Holliday junction branch migration complex subunit RuvB (375 aa).

A compositionally biased stretch (polar residues) spans 1-22; sequence MAIVSSKQSPQPDGSKKPSQAK. The interval 1–44 is disordered; it reads MAIVSSKQSPQPDGSKKPSQAKSVKKSVEHSKPQQTDALLQPEA. Positions 13 to 218 are large ATPase domain (RuvB-L); the sequence is DGSKKPSQAK…FGFVQRLRFY (206 aa). Residues L57, R58, G99, K102, T103, T104, 165–167, R208, Y218, and R255 contribute to the ATP site; that span reads EDF. T103 is a Mg(2+) binding site. The segment at 219–289 is small ATPAse domain (RuvB-S); it reads EADELGQIVL…IAQEALELFN (71 aa). The tract at residues 292–375 is head domain (RuvB-H); the sequence is PCGLDWTDRR…PPDEQMRLLS (84 aa). Positions 347 and 352 each coordinate DNA.

The protein belongs to the RuvB family. Homohexamer. Forms an RuvA(8)-RuvB(12)-Holliday junction (HJ) complex. HJ DNA is sandwiched between 2 RuvA tetramers; dsDNA enters through RuvA and exits via RuvB. An RuvB hexamer assembles on each DNA strand where it exits the tetramer. Each RuvB hexamer is contacted by two RuvA subunits (via domain III) on 2 adjacent RuvB subunits; this complex drives branch migration. In the full resolvosome a probable DNA-RuvA(4)-RuvB(12)-RuvC(2) complex forms which resolves the HJ.

It localises to the cytoplasm. It carries out the reaction ATP + H2O = ADP + phosphate + H(+). In terms of biological role, the RuvA-RuvB-RuvC complex processes Holliday junction (HJ) DNA during genetic recombination and DNA repair, while the RuvA-RuvB complex plays an important role in the rescue of blocked DNA replication forks via replication fork reversal (RFR). RuvA specifically binds to HJ cruciform DNA, conferring on it an open structure. The RuvB hexamer acts as an ATP-dependent pump, pulling dsDNA into and through the RuvAB complex. RuvB forms 2 homohexamers on either side of HJ DNA bound by 1 or 2 RuvA tetramers; 4 subunits per hexamer contact DNA at a time. Coordinated motions by a converter formed by DNA-disengaged RuvB subunits stimulates ATP hydrolysis and nucleotide exchange. Immobilization of the converter enables RuvB to convert the ATP-contained energy into a lever motion, pulling 2 nucleotides of DNA out of the RuvA tetramer per ATP hydrolyzed, thus driving DNA branch migration. The RuvB motors rotate together with the DNA substrate, which together with the progressing nucleotide cycle form the mechanistic basis for DNA recombination by continuous HJ branch migration. Branch migration allows RuvC to scan DNA until it finds its consensus sequence, where it cleaves and resolves cruciform DNA. This chain is Holliday junction branch migration complex subunit RuvB, found in Acaryochloris marina (strain MBIC 11017).